The following is a 336-amino-acid chain: Large ribosomal subunit protein uL10 (336 aa).

The tract at residues 292–336 (LKEKLSSRAAAPAPEEKEEEVEEEAEEEEEEEEEDAAAGLGALFG) is disordered. The span at 307 to 327 (EKEEEVEEEAEEEEEEEEEDA) shows a compositional bias: acidic residues.

The protein belongs to the universal ribosomal protein uL10 family. In terms of assembly, part of the 50S ribosomal subunit. Forms part of the ribosomal stalk which helps the ribosome interact with GTP-bound translation factors. Forms a heptameric L10(L12)2(L12)2(L12)2 complex, where L10 forms an elongated spine to which the L12 dimers bind in a sequential fashion.

Functionally, forms part of the ribosomal stalk, playing a central role in the interaction of the ribosome with GTP-bound translation factors. The polypeptide is Large ribosomal subunit protein uL10 (Methanothermobacter thermautotrophicus (strain ATCC 29096 / DSM 1053 / JCM 10044 / NBRC 100330 / Delta H) (Methanobacterium thermoautotrophicum)).